The sequence spans 202 residues: LexA repressor (202 aa).

Residues 28–48 (RAEIAQRLGFRSPNAAEEHLK) constitute a DNA-binding region (H-T-H motif). Residues Ser-119 and Lys-156 each act as for autocatalytic cleavage activity in the active site.

Belongs to the peptidase S24 family. In terms of assembly, homodimer.

The enzyme catalyses Hydrolysis of Ala-|-Gly bond in repressor LexA.. Represses a number of genes involved in the response to DNA damage (SOS response), including recA and lexA. Binds to the 16 bp palindromic sequence 5'-CTGTATATATATACAG-3'. In the presence of single-stranded DNA, RecA interacts with LexA causing an autocatalytic cleavage which disrupts the DNA-binding part of LexA, leading to derepression of the SOS regulon and eventually DNA repair. The polypeptide is LexA repressor (Yersinia enterocolitica serotype O:8 / biotype 1B (strain NCTC 13174 / 8081)).